The chain runs to 694 residues: Acetolactate synthase catalytic subunit, mitochondrial (694 aa).

The transit peptide at 1-42 (MLRSRQATNALRAVGQTRPLRSQTAVAFTQSLNKVPSNRRSE) directs the protein to the mitochondrion. Low complexity predominate over residues 45–58 (VATASSTASGAFNS). The tract at residues 45–69 (VATASSTASGAFNSQVRPTPSPTFN) is disordered. Over residues 59–69 (QVRPTPSPTFN) the composition is skewed to polar residues. Residue glutamate 140 coordinates thiamine diphosphate. Residues arginine 242, 358–379 (HGSA…LGGR), and 410–429 (EIMP…IVGD) each bind FAD. A thiamine pyrophosphate binding region spans residues 505 to 585 (QHQMWTAQHF…VKVIVLNNEE (81 aa)). Aspartate 556, asparagine 583, and glutamate 585 together coordinate Mg(2+).

This sequence belongs to the TPP enzyme family. As to quaternary structure, homodimer. The cofactor is Mg(2+). It depends on thiamine diphosphate as a cofactor.

It is found in the mitochondrion. The catalysed reaction is 2 pyruvate + H(+) = (2S)-2-acetolactate + CO2. It catalyses the reaction 2-oxobutanoate + pyruvate + H(+) = (S)-2-ethyl-2-hydroxy-3-oxobutanoate + CO2. Its pathway is amino-acid biosynthesis; L-isoleucine biosynthesis; L-isoleucine from 2-oxobutanoate: step 1/4. It functions in the pathway amino-acid biosynthesis; L-valine biosynthesis; L-valine from pyruvate: step 1/4. In terms of biological role, acetolactate synthase catalytic subunit, mitochondrial; part of the gene cluster that mediates the biosynthesis of chlorflavonin, a fungal flavonoid with acetolactate synthase inhibitory activity. Is not direcly involved in chlorflavonin biosynthesis but acts as a self-resistant protein that effectively confers chlorflavonin resistance to the native host. As a catalytic subunit of mitochondrial acetolactate synthase, catalyzes the first of a series of common steps in the biosynthesis of the branched-chain amino acids. Catalyzes the irreversible decarboxylation of pyruvate to a bound hydroxyethyl group that then condenses with either a second pyruvate molecule to form 2-acetolactate (AL) or with 2-ketobutyrate to form 2-aceto-2-hydroxybutyrate (AHB). The first product is the precursor for valine and leucine biosynthesis, while the second leads to isoleucine. The polypeptide is Acetolactate synthase catalytic subunit, mitochondrial (Aspergillus candidus).